Consider the following 127-residue polypeptide: Aspartate 1-decarboxylase (127 aa).

The Schiff-base intermediate with substrate; via pyruvic acid role is filled by serine 25. The residue at position 25 (serine 25) is a Pyruvic acid (Ser). Substrate is bound at residue threonine 57. The active-site Proton donor is the tyrosine 58. 73–75 (GAA) contacts substrate.

It belongs to the PanD family. As to quaternary structure, heterooctamer of four alpha and four beta subunits. It depends on pyruvate as a cofactor. Post-translationally, is synthesized initially as an inactive proenzyme, which is activated by self-cleavage at a specific serine bond to produce a beta-subunit with a hydroxyl group at its C-terminus and an alpha-subunit with a pyruvoyl group at its N-terminus.

It localises to the cytoplasm. The enzyme catalyses L-aspartate + H(+) = beta-alanine + CO2. Its pathway is cofactor biosynthesis; (R)-pantothenate biosynthesis; beta-alanine from L-aspartate: step 1/1. Catalyzes the pyruvoyl-dependent decarboxylation of aspartate to produce beta-alanine. This Listeria monocytogenes serotype 4b (strain CLIP80459) protein is Aspartate 1-decarboxylase.